Here is a 433-residue protein sequence, read N- to C-terminus: tRNA(Ile)-lysidine synthase (433 aa).

37-42 is an ATP binding site; it reads SGGKDS.

It belongs to the tRNA(Ile)-lysidine synthase family.

It localises to the cytoplasm. The catalysed reaction is cytidine(34) in tRNA(Ile2) + L-lysine + ATP = lysidine(34) in tRNA(Ile2) + AMP + diphosphate + H(+). In terms of biological role, ligates lysine onto the cytidine present at position 34 of the AUA codon-specific tRNA(Ile) that contains the anticodon CAU, in an ATP-dependent manner. Cytidine is converted to lysidine, thus changing the amino acid specificity of the tRNA from methionine to isoleucine. The protein is tRNA(Ile)-lysidine synthase of Leptospira interrogans serogroup Icterohaemorrhagiae serovar copenhageni (strain Fiocruz L1-130).